We begin with the raw amino-acid sequence, 471 residues long: Putative multidrug resistance protein MdtD (471 aa).

At 1 to 11 (MTDLPDNTRWQ) the chain is on the periplasmic side. A helical transmembrane segment spans residues 12–32 (LWIVAFGFFMQSLDTTIVNTA). Topologically, residues 33–48 (LPSMAQSLGESPLHMH) are cytoplasmic. A helical transmembrane segment spans residues 49 to 69 (MVIVSYVLTVAVMLPASGWLA). Over 70-76 (DKVGVRN) the chain is Periplasmic. The helical transmembrane segment at 77–97 (IFFTAIVLFTLGSLFCALSGT) threads the bilayer. The Cytoplasmic portion of the chain corresponds to 98–101 (LNEL). A helical transmembrane segment spans residues 102–124 (LLARALQGVGGAMMVPVGRLTVM). At 125–137 (KIVPREQYMAAMT) the chain is on the periplasmic side. Residues 138–158 (FVTLPGQVGPLLGPALGGLLV) traverse the membrane as a helical segment. Over 159–164 (EYASWH) the chain is Cytoplasmic. Residues 165 to 185 (WIFLINIPVGIIGAIATLMLM) form a helical membrane-spanning segment. Over 186–196 (PNYTMQTRRFD) the chain is Periplasmic. A helical transmembrane segment spans residues 197 to 217 (LSGFLLLAIGMAVLTLALDGS). At 218–224 (KGTGLSP) the chain is on the cytoplasmic side. The chain crosses the membrane as a helical span at residues 225 to 245 (LAITGLVAVGVVALVLYLLHA). The Periplasmic segment spans residues 246–262 (RNNNRALFSLKLFRTRT). Residues 263-283 (FSLGLAGSFAGRIGSGMLPFM) form a helical membrane-spanning segment. Residues 284–285 (TP) lie on the Cytoplasmic side of the membrane. The helical transmembrane segment at 286-306 (VFLQIGLGFSPFHAGLMMIPM) threads the bilayer. The Periplasmic portion of the chain corresponds to 307 to 341 (VLGSMGMKRIVVQVVNRFGYRRVLVATTLGLSLVT). Residues 342-362 (LLFMTTALLGWYYVLPFVLFL) traverse the membrane as a helical segment. Topologically, residues 363 to 395 (QGMVNSTRFSSMNTLTLKDLPDNLASSGNSLLS) are cytoplasmic. The chain crosses the membrane as a helical span at residues 396 to 416 (MIMQLSMSIGVTIAGLLLGLF). At 417–430 (GSQHVSVDSGTTQT) the chain is on the periplasmic side. A helical transmembrane segment spans residues 431 to 451 (VFMYTWLSMAFIIALPAFIFA). The Cytoplasmic segment spans residues 452–471 (RVPNDTHQNVAISRRKRSAQ).

It belongs to the major facilitator superfamily. TCR/Tet family.

It localises to the cell inner membrane. The chain is Putative multidrug resistance protein MdtD from Escherichia coli O17:K52:H18 (strain UMN026 / ExPEC).